The chain runs to 440 residues: T-box transcription factor T homolog 2 (440 aa).

A DNA-binding region (T-box) is located at residues 44 to 215 (LWEKFKSLTN…HNPFAKAFLD (172 aa)). Disordered stretches follow at residues 282 to 303 (APYPHPYQRSSPPTNYGHDTAA) and 393 to 440 (TTAS…MPSM). The segment covering 409–440 (STDSGYGHSTTPPAPQTRITSNNWSPMTMPSM) has biased composition (polar residues).

In terms of tissue distribution, mesoderm and notochord.

It is found in the nucleus. Functionally, involved in the transcriptional regulation of genes required for mesoderm formation and differentiation. The chain is T-box transcription factor T homolog 2 from Branchiostoma floridae (Florida lancelet).